The chain runs to 395 residues: Probable FMNH2-dependent monooxygenase SfnC (395 aa).

Involved in the dimethyl sulfide degradation pathway. In Pseudomonas putida (Arthrobacter siderocapsulatus), this protein is Probable FMNH2-dependent monooxygenase SfnC.